The sequence spans 1197 residues: SRC kinase signaling inhibitor 1 (1197 aa).

The span at 19–45 shows a compositional bias: basic and acidic residues; sequence AEGRARSPREEVGPRDPGGRGEPDPER. The interval 19–80 is disordered; the sequence is AEGRARSPRE…GGSGGRRFSN (62 aa). Residues Ser-47 and Ser-52 each carry the phosphoserine modification. The span at 65-75 shows a compositional bias: gly residues; the sequence is LGGGGSGGSGG. Position 79 is a phosphoserine (Ser-79). Thr-86 is subject to Phosphothreonine. Residues Ser-87, Ser-98, Ser-178, Ser-200, Ser-204, Ser-214, and Ser-260 each carry the phosphoserine modification. At Tyr-276 the chain carries Phosphotyrosine. Positions 319-415 are disordered; that stretch reads ASRESSPTRR…RRDVKPDEDL (97 aa). A compositionally biased stretch (polar residues) spans 321–331; sequence RESSPTRRLNN. Residues 332–341 are compositionally biased toward low complexity; sequence LSPASHLASS. Phosphoserine is present on residues Ser-333, Ser-342, and Ser-359. Residues 348 to 366 show a composition bias toward low complexity; that stretch reads PSGLPSGLPSGSPSRSRLS. Omega-N-methylarginine occurs at positions 364 and 371. Residues Ser-378, Ser-397, and Ser-399 each carry the phosphoserine modification. Over residues 391–400 the composition is skewed to polar residues; the sequence is PTSQGVSPSP. The span at 404-415 shows a compositional bias: basic and acidic residues; sequence LERRDVKPDEDL. Tyr-431 carries the post-translational modification Phosphotyrosine. Residues 501 to 676 form a disordered region; it reads GFRLPPSSPQ…AVSSTPAGQP (176 aa). Pro residues predominate over residues 520–531; the sequence is GGPPPPHSPYSG. Phosphoserine occurs at positions 527, 530, and 534. Arg-535 is modified (omega-N-methylarginine). A phosphoserine mark is found at Ser-537, Ser-547, Ser-549, Ser-551, and Ser-556. Basic and acidic residues predominate over residues 595–607; the sequence is KDTETRERMEAME. 2 positions are modified to phosphoserine: Ser-631 and Ser-655. A phosphothreonine mark is found at Thr-658 and Thr-671. The interaction with SNAP25 stretch occupies residues 681–731; sequence RLQMQMHLRGLQNSASDLRGQLQQLRKLQLQNQESVRALLKRTEAELSMRV. Coiled coils occupy residues 688–708 and 760–780; these read LRGL…LRKL and EELI…IQRD. Ser-878 and Ser-900 each carry phosphoserine. Disordered stretches follow at residues 891-949 and 983-1065; these read GLDF…ERDW and DCAS…VVTS. Residue Thr-918 is modified to Phosphothreonine. Ser-1021 is subject to Phosphoserine. The segment covering 1036–1045 has biased composition (pro residues); sequence KSPPPPPPRR. 2 positions are modified to phosphoserine: Ser-1077 and Ser-1094. Residues 1141-1163 form a disordered region; it reads SRLKAAQGPAGSPDKGKHGKQRT.

This sequence belongs to the SRCIN1 family. In terms of assembly, interacts with BCAR1/p130Cas through its C-terminal domain and with CSK, CTTN and SRC. Also interacts with MAPRE3/EB3, SORBS3/vinexin and the N-terminal coiled-coil region of SNAP25. Post-translationally, tyrosine-phosphorylated in response to EGF and to cell adhesion to integrin ligands. In terms of tissue distribution, expressed exclusively in brain. Abundant in telencephalon and expressed moderately in cerebellum, hypothalamus, thalamus, superior and inferior colliculi, and olfactory bulb. No expression detected in medulla oblongata, spinal cord or pituitary gland. Enriched in the neuropil rather than soma in the thalamus, corpus striatum and cerebral cortex. Detected in astrocytes.

The protein resides in the cytoplasm. It is found in the cytoskeleton. The protein localises to the cell projection. Its subcellular location is the axon. It localises to the dendrite. The protein resides in the presynapse. It is found in the postsynapse. The protein localises to the postsynaptic density. Its function is as follows. Acts as a negative regulator of SRC by activating CSK which inhibits SRC activity and downstream signaling, leading to impaired cell spreading and migration. Regulates dendritic spine morphology. Involved in calcium-dependent exocytosis. May play a role in neurotransmitter release or synapse maintenance. The polypeptide is SRC kinase signaling inhibitor 1 (Rattus norvegicus (Rat)).